A 173-amino-acid chain; its full sequence is dCTP deaminase, dUMP-forming (173 aa).

DCTP-binding positions include 93–98, Asp111, 119–121, and Gln138; these read RSSIGR and TLE. The active-site Proton donor/acceptor is Glu121.

It belongs to the dCTP deaminase family. In terms of assembly, homotrimer.

It carries out the reaction dCTP + 2 H2O = dUMP + NH4(+) + diphosphate. Its pathway is pyrimidine metabolism; dUMP biosynthesis; dUMP from dCTP: step 1/1. Bifunctional enzyme that catalyzes both the deamination of dCTP to dUTP and the hydrolysis of dUTP to dUMP without releasing the toxic dUTP intermediate. The sequence is that of dCTP deaminase, dUMP-forming from Leptospira borgpetersenii serovar Hardjo-bovis (strain JB197).